The chain runs to 284 residues: Bifunctional protein FolD (284 aa).

NADP(+) is bound by residues glycine 166–serine 168 and isoleucine 232.

The protein belongs to the tetrahydrofolate dehydrogenase/cyclohydrolase family. Homodimer.

It catalyses the reaction (6R)-5,10-methylene-5,6,7,8-tetrahydrofolate + NADP(+) = (6R)-5,10-methenyltetrahydrofolate + NADPH. It carries out the reaction (6R)-5,10-methenyltetrahydrofolate + H2O = (6R)-10-formyltetrahydrofolate + H(+). Its pathway is one-carbon metabolism; tetrahydrofolate interconversion. Catalyzes the oxidation of 5,10-methylenetetrahydrofolate to 5,10-methenyltetrahydrofolate and then the hydrolysis of 5,10-methenyltetrahydrofolate to 10-formyltetrahydrofolate. This chain is Bifunctional protein FolD, found in Shewanella oneidensis (strain ATCC 700550 / JCM 31522 / CIP 106686 / LMG 19005 / NCIMB 14063 / MR-1).